The following is a 93-amino-acid chain: Small ribosomal subunit protein uS19 (93 aa).

It belongs to the universal ribosomal protein uS19 family.

Protein S19 forms a complex with S13 that binds strongly to the 16S ribosomal RNA. This is Small ribosomal subunit protein uS19 from Paenarthrobacter aurescens (strain TC1).